The following is a 205-amino-acid chain: Holliday junction branch migration complex subunit RuvA (205 aa).

The segment at 1-64 (MIGKLKGTID…EDQLKLFGFL (64 aa)) is domain I. The segment at 65–143 (SALEREWFRL…AFSGEMAPSI (79 aa)) is domain II. Residues 144–153 (GLKQELGEGV) form a flexible linker region. Residues 153–205 (VAAAPVADAVSALTNLGYSRDQAANAVAAALKNGGEGGDSAKLIRLGLKELSR) form a domain III region.

The protein belongs to the RuvA family. As to quaternary structure, homotetramer. Forms an RuvA(8)-RuvB(12)-Holliday junction (HJ) complex. HJ DNA is sandwiched between 2 RuvA tetramers; dsDNA enters through RuvA and exits via RuvB. An RuvB hexamer assembles on each DNA strand where it exits the tetramer. Each RuvB hexamer is contacted by two RuvA subunits (via domain III) on 2 adjacent RuvB subunits; this complex drives branch migration. In the full resolvosome a probable DNA-RuvA(4)-RuvB(12)-RuvC(2) complex forms which resolves the HJ.

The protein localises to the cytoplasm. Functionally, the RuvA-RuvB-RuvC complex processes Holliday junction (HJ) DNA during genetic recombination and DNA repair, while the RuvA-RuvB complex plays an important role in the rescue of blocked DNA replication forks via replication fork reversal (RFR). RuvA specifically binds to HJ cruciform DNA, conferring on it an open structure. The RuvB hexamer acts as an ATP-dependent pump, pulling dsDNA into and through the RuvAB complex. HJ branch migration allows RuvC to scan DNA until it finds its consensus sequence, where it cleaves and resolves the cruciform DNA. This is Holliday junction branch migration complex subunit RuvA from Rhizobium meliloti (strain 1021) (Ensifer meliloti).